The sequence spans 432 residues: UDP-N-acetylmuramate--L-alanine ligase (432 aa).

G108–S114 provides a ligand contact to ATP.

This sequence belongs to the MurCDEF family.

The protein resides in the cytoplasm. It carries out the reaction UDP-N-acetyl-alpha-D-muramate + L-alanine + ATP = UDP-N-acetyl-alpha-D-muramoyl-L-alanine + ADP + phosphate + H(+). It participates in cell wall biogenesis; peptidoglycan biosynthesis. In terms of biological role, cell wall formation. This is UDP-N-acetylmuramate--L-alanine ligase from Bacillus pumilus (strain SAFR-032).